The sequence spans 428 residues: UPF0229 protein YeaH (428 aa).

Over residues 78 to 90 (GNDHFIQNDRIER) the composition is skewed to basic and acidic residues. A disordered region spans residues 78 to 111 (GNDHFIQNDRIERPQGGGGGGSGSGQGQASQDGE). The span at 92-103 (QGGGGGGSGSGQ) shows a compositional bias: gly residues.

Belongs to the UPF0229 family.

The chain is UPF0229 protein YeaH from Salmonella enteritidis PT4 (strain P125109).